The following is a 278-amino-acid chain: MEALEEKEAQVAAWLKKIFGDHPIPQYEVNAWTTEILYNLSERNRIRDRDVYLVTEDLKQKAKEYESEAKHLQDLLMESVNFSPASLSSTGSRYLNALVDSAVVLETKDTSLASFIPAVNDLTSDLFRTKSKNEEIKLELAKLEKNLTATLVLEKCLQEDLKKAELHLCTERARVDSRLQNMDFLKAKSEEFRSGIRTAEEQLSARGMDASLSHQSLVALSEKLAELKRQTMPLKKKLESYLDLMPNPSLAQVKIEEAKRELDTIEAELTKRVNMMEL.

3 coiled-coil regions span residues 53–81 (LVTE…ESVN), 124–152 (SDLF…ATLV), and 183–277 (DFLK…NMME).

This sequence belongs to the HAUS1 family. As to quaternary structure, component of the HAUS augmin-like complex. The complex interacts with the gamma-tubulin ring complex and this interaction is required for spindle assembly. Associates with microtubules. The interaction with microtubules is strong during mitosis, while it is weak or absent during interphase. It is unclear whether this interaction is direct or indirect. Interacts with EML3 (phosphorylated form).

It is found in the cytoplasm. The protein localises to the cytoskeleton. Its subcellular location is the microtubule organizing center. The protein resides in the centrosome. It localises to the spindle. It is found in the spindle pole. In terms of biological role, contributes to mitotic spindle assembly, maintenance of centrosome integrity and completion of cytokinesis as part of the HAUS augmin-like complex. This Bos taurus (Bovine) protein is HAUS augmin-like complex subunit 1 (HAUS1).